A 245-amino-acid polypeptide reads, in one-letter code: 1-(5-phosphoribosyl)-5-[(5-phosphoribosylamino)methylideneamino] imidazole-4-carboxamide isomerase (245 aa).

Asp10 functions as the Proton acceptor in the catalytic mechanism. The active-site Proton donor is Asp129.

Belongs to the HisA/HisF family.

It is found in the cytoplasm. It catalyses the reaction 1-(5-phospho-beta-D-ribosyl)-5-[(5-phospho-beta-D-ribosylamino)methylideneamino]imidazole-4-carboxamide = 5-[(5-phospho-1-deoxy-D-ribulos-1-ylimino)methylamino]-1-(5-phospho-beta-D-ribosyl)imidazole-4-carboxamide. The protein operates within amino-acid biosynthesis; L-histidine biosynthesis; L-histidine from 5-phospho-alpha-D-ribose 1-diphosphate: step 4/9. The protein is 1-(5-phosphoribosyl)-5-[(5-phosphoribosylamino)methylideneamino] imidazole-4-carboxamide isomerase of Parafrankia sp. (strain EAN1pec).